Reading from the N-terminus, the 723-residue chain is Fatty acid oxidation complex subunit alpha (723 aa).

The segment at 1–189 (MIYQAETLQV…KIGLLDAVVD (189 aa)) is enoyl-CoA hydratase/isomerase. Residue D296 coordinates substrate. The tract at residues 311-723 (NKETQRAAVL…FYGAQQQGSI (413 aa)) is 3-hydroxyacyl-CoA dehydrogenase. NAD(+) is bound by residues M325, D344, 401 to 403 (VVE), K408, and S430. H451 acts as the For 3-hydroxyacyl-CoA dehydrogenase activity in catalysis. N454 serves as a coordination point for NAD(+). Residues N501 and Y661 each coordinate substrate.

In the N-terminal section; belongs to the enoyl-CoA hydratase/isomerase family. This sequence in the C-terminal section; belongs to the 3-hydroxyacyl-CoA dehydrogenase family. In terms of assembly, heterotetramer of two alpha chains (FadB) and two beta chains (FadA).

It catalyses the reaction a (3S)-3-hydroxyacyl-CoA + NAD(+) = a 3-oxoacyl-CoA + NADH + H(+). The enzyme catalyses a (3S)-3-hydroxyacyl-CoA = a (2E)-enoyl-CoA + H2O. The catalysed reaction is a 4-saturated-(3S)-3-hydroxyacyl-CoA = a (3E)-enoyl-CoA + H2O. It carries out the reaction (3S)-3-hydroxybutanoyl-CoA = (3R)-3-hydroxybutanoyl-CoA. It catalyses the reaction a (3Z)-enoyl-CoA = a 4-saturated (2E)-enoyl-CoA. The enzyme catalyses a (3E)-enoyl-CoA = a 4-saturated (2E)-enoyl-CoA. It participates in lipid metabolism; fatty acid beta-oxidation. Involved in the aerobic and anaerobic degradation of long-chain fatty acids via beta-oxidation cycle. Catalyzes the formation of 3-oxoacyl-CoA from enoyl-CoA via L-3-hydroxyacyl-CoA. It can also use D-3-hydroxyacyl-CoA and cis-3-enoyl-CoA as substrate. The protein is Fatty acid oxidation complex subunit alpha of Vibrio vulnificus (strain CMCP6).